The chain runs to 260 residues: Ribosome maturation factor RimP (260 aa).

The segment at 198-260 (QSLGILPPPP…RGDIDPIEGE (63 aa)) is disordered. Composition is skewed to basic and acidic residues over residues 210–228 (AKTD…ENGK) and 238–254 (NTKE…RGDI).

It belongs to the RimP family.

The protein localises to the cytoplasm. In terms of biological role, required for maturation of 30S ribosomal subunits. The polypeptide is Ribosome maturation factor RimP (Nitrobacter winogradskyi (strain ATCC 25391 / DSM 10237 / CIP 104748 / NCIMB 11846 / Nb-255)).